A 310-amino-acid chain; its full sequence is DNA-directed RNA polymerase subunit alpha (310 aa).

Residues 1-230 are alpha N-terminal domain (alpha-NTD); the sequence is MLGKVNGVQI…KLFNPLRVLD (230 aa). The segment at 242–310 is alpha C-terminal domain (alpha-CTD); sequence NSLIKQKLIE…YKKFGVKLKH (69 aa).

It belongs to the RNA polymerase alpha chain family. In plastids the minimal PEP RNA polymerase catalytic core is composed of four subunits: alpha, beta, beta', and beta''. When a (nuclear-encoded) sigma factor is associated with the core the holoenzyme is formed, which can initiate transcription.

It localises to the plastid. It is found in the chloroplast. The enzyme catalyses RNA(n) + a ribonucleoside 5'-triphosphate = RNA(n+1) + diphosphate. Functionally, DNA-dependent RNA polymerase catalyzes the transcription of DNA into RNA using the four ribonucleoside triphosphates as substrates. In Cyanidium caldarium (Red alga), this protein is DNA-directed RNA polymerase subunit alpha.